Consider the following 610-residue polypeptide: UvrABC system protein C (610 aa).

In terms of domain architecture, GIY-YIG spans 16–94; sequence SQPGVYRMYD…IKLYQPRYNV (79 aa). One can recognise a UVR domain in the interval 204–239; sequence DQVLTQLISRMETASQNLEFEEAARIRDQIQAVRRV.

Belongs to the UvrC family. In terms of assembly, interacts with UvrB in an incision complex.

It localises to the cytoplasm. The UvrABC repair system catalyzes the recognition and processing of DNA lesions. UvrC both incises the 5' and 3' sides of the lesion. The N-terminal half is responsible for the 3' incision and the C-terminal half is responsible for the 5' incision. The polypeptide is UvrABC system protein C (Escherichia coli O1:K1 / APEC).